A 475-amino-acid chain; its full sequence is tRNA-2-methylthio-N(6)-dimethylallyladenosine synthase (475 aa).

The span at 1 to 10 shows a compositional bias: basic and acidic residues; the sequence is MQETTVKRDG. The segment at 1–22 is disordered; the sequence is MQETTVKRDGASPSDAGTPATT. One can recognise an MTTase N-terminal domain in the interval 27-144; the sequence is GKLYIRTFGC…LPDLIKRRRA (118 aa). Cys36, Cys73, Cys107, Cys181, Cys185, and Cys188 together coordinate [4Fe-4S] cluster. Residues 167–400 form the Radical SAM core domain; the sequence is RVDGATAFVS…QALINQQAAA (234 aa). The TRAM domain maps to 403–466; that stretch reads QGMIGTRQRV…TNSLRGRVAG (64 aa).

Belongs to the methylthiotransferase family. MiaB subfamily. Monomer. [4Fe-4S] cluster serves as cofactor.

The protein resides in the cytoplasm. The enzyme catalyses N(6)-dimethylallyladenosine(37) in tRNA + (sulfur carrier)-SH + AH2 + 2 S-adenosyl-L-methionine = 2-methylsulfanyl-N(6)-dimethylallyladenosine(37) in tRNA + (sulfur carrier)-H + 5'-deoxyadenosine + L-methionine + A + S-adenosyl-L-homocysteine + 2 H(+). Functionally, catalyzes the methylthiolation of N6-(dimethylallyl)adenosine (i(6)A), leading to the formation of 2-methylthio-N6-(dimethylallyl)adenosine (ms(2)i(6)A) at position 37 in tRNAs that read codons beginning with uridine. The chain is tRNA-2-methylthio-N(6)-dimethylallyladenosine synthase from Bordetella bronchiseptica (strain ATCC BAA-588 / NCTC 13252 / RB50) (Alcaligenes bronchisepticus).